The sequence spans 254 residues: 5'-nucleotidase SurE (254 aa).

A divalent metal cation-binding residues include D8, D9, S40, and N93.

Belongs to the SurE nucleotidase family. A divalent metal cation serves as cofactor.

The protein localises to the cytoplasm. It catalyses the reaction a ribonucleoside 5'-phosphate + H2O = a ribonucleoside + phosphate. Nucleotidase that shows phosphatase activity on nucleoside 5'-monophosphates. This chain is 5'-nucleotidase SurE, found in Methylorubrum extorquens (strain CM4 / NCIMB 13688) (Methylobacterium extorquens).